Here is a 280-residue protein sequence, read N- to C-terminus: MRIIETIEEMKKFSEEMREKKKTIGFVPTMGYLHEGHLSLVRRARAENDVVVVSIFVNPTQFGPNEDYERYPRDFERDRKLLEKENVDCVFHPSVEEMYPPDFSTFVEETKLSKPLCGRSRPGHFRGVCTVVTKLFNIVKPHRAYFGQKDAQQFRVLRRMVRDLNMDVEMIECPIVREPDGLAMSSRNVYLTPEERKQALALYQSLKIAENLFLNGERDAVKIKEAMINHLSRFDRVKIDYVEIVDEETLEPVEKIDRKVIVAVAAWVGKARLIDNTILG.

M30 to H37 is an ATP binding site. The active-site Proton donor is H37. Residue Q61 participates in (R)-pantoate binding. Q61 provides a ligand contact to beta-alanine. G147 to D150 lines the ATP pocket. Q153 is a binding site for (R)-pantoate. Residues V176 and M184–R187 contribute to the ATP site.

The protein belongs to the pantothenate synthetase family. In terms of assembly, homodimer.

It is found in the cytoplasm. It carries out the reaction (R)-pantoate + beta-alanine + ATP = (R)-pantothenate + AMP + diphosphate + H(+). Its pathway is cofactor biosynthesis; (R)-pantothenate biosynthesis; (R)-pantothenate from (R)-pantoate and beta-alanine: step 1/1. Functionally, catalyzes the condensation of pantoate with beta-alanine in an ATP-dependent reaction via a pantoyl-adenylate intermediate. This chain is Pantothenate synthetase, found in Thermotoga neapolitana.